The primary structure comprises 254 residues: Small ribosomal subunit protein uS2 (254 aa).

The protein belongs to the universal ribosomal protein uS2 family.

In Brucella ovis (strain ATCC 25840 / 63/290 / NCTC 10512), this protein is Small ribosomal subunit protein uS2.